Here is a 288-residue protein sequence, read N- to C-terminus: Energy-coupling factor transporter ATP-binding protein EcfA2 (288 aa).

The ABC transporter domain occupies 3 to 246 (IKLEQLGYCY…PDELVDLGLS (244 aa)). 40 to 47 (GHTGSGKS) contacts ATP.

It belongs to the ABC transporter superfamily. Energy-coupling factor EcfA family. Forms a stable energy-coupling factor (ECF) transporter complex composed of 2 membrane-embedded substrate-binding proteins (S component), 2 ATP-binding proteins (A component) and 2 transmembrane proteins (T component).

The protein resides in the cell membrane. Functionally, ATP-binding (A) component of a common energy-coupling factor (ECF) ABC-transporter complex. Unlike classic ABC transporters this ECF transporter provides the energy necessary to transport a number of different substrates. The sequence is that of Energy-coupling factor transporter ATP-binding protein EcfA2 from Listeria monocytogenes serovar 1/2a (strain ATCC BAA-679 / EGD-e).